A 372-amino-acid polypeptide reads, in one-letter code: N-methyl-L-tryptophan oxidase (372 aa).

Residue 4-34 (DLIIIGSGSVGAAAGYYATRAGLNVLMTDAH) participates in FAD binding. C308 carries the S-8alpha-FAD cysteine modification.

It belongs to the MSOX/MTOX family. MTOX subfamily. Monomer. The cofactor is FAD.

It catalyses the reaction N(alpha)-methyl-L-tryptophan + O2 + H2O = L-tryptophan + formaldehyde + H2O2. Catalyzes the oxidative demethylation of N-methyl-L-tryptophan. The sequence is that of N-methyl-L-tryptophan oxidase from Escherichia coli O7:K1 (strain IAI39 / ExPEC).